The sequence spans 359 residues: 3-dehydroquinate synthase (359 aa).

Residues 70 to 75 (DGEQYK), 105 to 109 (GVIGD), 129 to 130 (TT), Lys-142, Lys-151, and 169 to 172 (FYKT) contribute to the NAD(+) site. Residues Glu-184, His-247, and His-264 each contribute to the Zn(2+) site.

Belongs to the sugar phosphate cyclases superfamily. Dehydroquinate synthase family. It depends on Co(2+) as a cofactor. Zn(2+) is required as a cofactor. The cofactor is NAD(+).

Its subcellular location is the cytoplasm. It carries out the reaction 7-phospho-2-dehydro-3-deoxy-D-arabino-heptonate = 3-dehydroquinate + phosphate. The protein operates within metabolic intermediate biosynthesis; chorismate biosynthesis; chorismate from D-erythrose 4-phosphate and phosphoenolpyruvate: step 2/7. Its function is as follows. Catalyzes the conversion of 3-deoxy-D-arabino-heptulosonate 7-phosphate (DAHP) to dehydroquinate (DHQ). This is 3-dehydroquinate synthase from Francisella tularensis subsp. tularensis (strain WY96-3418).